Consider the following 323-residue polypeptide: Cobalamin biosynthesis protein CobD (323 aa).

Helical transmembrane passes span 52 to 72, 73 to 93, 154 to 174, 214 to 234, and 294 to 314; these read IAGV…TWLM, VWGS…LLSS, DGII…GMAF, ALLM…AASI, and IRLM…TAAL.

It belongs to the CobD/CbiB family.

It is found in the cell membrane. Its pathway is cofactor biosynthesis; adenosylcobalamin biosynthesis. In terms of biological role, converts cobyric acid to cobinamide by the addition of aminopropanol on the F carboxylic group. This is Cobalamin biosynthesis protein CobD from Pelobacter propionicus (strain DSM 2379 / NBRC 103807 / OttBd1).